Reading from the N-terminus, the 725-residue chain is Putative oligopeptide transporter YGL114W (725 aa).

Transmembrane regions (helical) follow at residues Ala28–Leu48, Phe134–Pro154, Ile254–Val274, Trp353–Val373, Ile449–Ile469, Ile472–Ile492, Phe564–Cys584, Tyr644–Asn664, and Ile697–Phe717.

Belongs to the oligopeptide OPT transporter family.

It localises to the membrane. This is Putative oligopeptide transporter YGL114W from Saccharomyces cerevisiae (strain ATCC 204508 / S288c) (Baker's yeast).